The sequence spans 1507 residues: DE-cadherin (1507 aa).

The N-terminal stretch at 1-69 is a signal peptide; the sequence is MSTSVQRMSR…AISLLSPALA (69 aa). Residues 70–261 constitute a propeptide that is removed on maturation; that stretch reads LHSPPDKNFS…IYLKRPIDKR (192 aa). Cadherin domains follow at residues 97 to 195, 204 to 301, 311 to 412, 420 to 522, 532 to 633, 631 to 733, and 741 to 835; these read VKEE…APAF, MSEN…PPSF, LKEN…IPYY, ILEN…KPHF, LLED…TILE, ILEE…APFL, and WQEN…NDNA. Residues 262–1328 lie on the Extracellular side of the membrane; the sequence is PGQSYAIIVR…VAFSFGIDRN (1067 aa). 3 N-linked (GlcNAc...) asparagine glycosylation sites follow: N317, N466, and N552. N-linked (GlcNAc...) asparagine glycans are attached at residues N766, N949, N983, N999, and N1073. One can recognise an EGF-like domain in the interval 1084–1123; it reads VQAQCVCEAPLMRRCLNGGSPRYGENDVCDCIDGFTGPHC. 2 disulfides stabilise this stretch: C1098–C1112 and C1114–C1123. A Laminin G-like domain is found at 1125-1313; it reads LVSVAFYGSG…SVFRNIDSGC (189 aa). N-linked (GlcNAc...) asparagine glycans are attached at residues N1145, N1274, and N1290. A disulfide bond links C1287 and C1313. Residues 1329–1349 form a helical membrane-spanning segment; that stretch reads FIIAIIVCLALLLIILLAVVV. The Cytoplasmic portion of the chain corresponds to 1350-1507; it reads QKKQKNGWHE…NVDDDQGWRI (158 aa). The tract at residues 1350–1507 is interaction with Inx2; the sequence is QKKQKNGWHE…NVDDDQGWRI (158 aa). Residues 1488-1507 are disordered; sequence YGEEPSDTDSNVDDDQGWRI. Phosphoserine is present on S1493.

In terms of assembly, interacts (via cytoplasmic region) with Inx2 (via cytoplasmic loop). Interacts with Hakai. Interacts with Myo31DF. In terms of processing, N-glycosylation is important for biosynthesis and function. In terms of tissue distribution, in early stage 9 and stage 10 oocytes, expressed in border cells, strongly expressed in polar cells and very weakly expressed in the nurse cells (at protein level). In the embryo, expressed in the leading edge cells of the dorsal epidermis (at protein level). Stage 10 embryos exhibit intense expression in epithelial cells. Stage 14 embryos show expression in the hindgut (at the apical poles of cell-cell boundaries), at the apical junctions of tracheal cells and in the dorsal longitudinal trunk. In stage 16 embryos the glial midline cells of the central nervous system show strong expression.

It is found in the cell membrane. The protein resides in the apical cell membrane. Its function is as follows. Cadherins are calcium-dependent cell adhesion proteins. In connecting cells they preferentially interact with themselves in a homophilic manner; cadherins may thus contribute to the sorting of heterogeneous cell types. During oogenesis, integral component of the guidance mechanisms that regulate the directional persistent collective migration of the border cell (BC) cluster through the nurse cells to the oocyte. Functions downstream of the two chemoattractant receptors, Pvr and Egfr, to promote BC adhesion between the leader cells of the migrating cluster and the surrounding nurse cells. This adhesion increases Rac1 signaling in the leading cells, which in turn stabilizes DE-cadherin/DE-cadherin adhesions through the formation of forward-directed protrusions which attach/detach to the surrounding nurse cells in order to pull the cluster through the egg chamber to the oocyte. Within the BC cluster, also promotes adhesion between BCs, and between BCs and polar cells which enables the lead BC to communicate direction to the other cells in the cluster, providing polarity to each individual cell and ensuring collective behavior. May function in cell intercalation in the lateral epidermis during germband extension. Contributes to the determination of body left-right asymmetry by enhancing Myo31DF activity and inhibiting Myo61F activity. The protein is DE-cadherin of Drosophila melanogaster (Fruit fly).